A 467-amino-acid chain; its full sequence is UDP-N-acetylmuramate--L-alanine ligase (467 aa).

Position 114–120 (114–120 (GTHGKTT)) interacts with ATP.

This sequence belongs to the MurCDEF family.

The protein resides in the cytoplasm. It catalyses the reaction UDP-N-acetyl-alpha-D-muramate + L-alanine + ATP = UDP-N-acetyl-alpha-D-muramoyl-L-alanine + ADP + phosphate + H(+). It participates in cell wall biogenesis; peptidoglycan biosynthesis. Its function is as follows. Cell wall formation. The sequence is that of UDP-N-acetylmuramate--L-alanine ligase from Bradyrhizobium diazoefficiens (strain JCM 10833 / BCRC 13528 / IAM 13628 / NBRC 14792 / USDA 110).